Consider the following 603-residue polypeptide: Carbon catabolite repressor protein 4 homolog 2 (603 aa).

The segment at 115–136 (ENNANEDDDLNRNNSAGSGSLA) is disordered. The segment covering 126-136 (RNNSAGSGSLA) has biased composition (low complexity). Glu302 is a binding site for Mg(2+).

It belongs to the CCR4/nocturin family. Component of the CCR4-NOT complex, at least composed of CRR4 and CAF1 proteins. Mg(2+) is required as a cofactor.

The protein resides in the nucleus. Its subcellular location is the cytoplasm. It carries out the reaction Exonucleolytic cleavage of poly(A) to 5'-AMP.. Functionally, acts as a catalytic component of the CCR4-NOT core complex, which in the nucleus seems to be a general transcription factor, and in the cytoplasm the major mRNA deadenylase involved in mRNA turnover. This chain is Carbon catabolite repressor protein 4 homolog 2 (CCR4-2), found in Arabidopsis thaliana (Mouse-ear cress).